The chain runs to 427 residues: GTPase Obg (427 aa).

An Obg domain is found at 1 to 158 (MFVDKVKVYV…RDVILELKVL (158 aa)). Positions 118–144 (KGGRGGRGNTRFATPANPAPELSENGE) are disordered. The OBG-type G domain occupies 159–329 (ADAGLVGFPS…LLRAIMDTIE (171 aa)). GTP is bound by residues 165–172 (GFPSVGKS), 190–194 (FTTIT), 212–215 (DLPG), 282–285 (NKMD), and 310–312 (SAL). Residues S172 and T192 each coordinate Mg(2+). Residues 349–427 (KHDKEQDPFV…LLEFEFEFIE (79 aa)) form the OCT domain.

The protein belongs to the TRAFAC class OBG-HflX-like GTPase superfamily. OBG GTPase family. As to quaternary structure, monomer. It depends on Mg(2+) as a cofactor.

The protein resides in the cytoplasm. Its function is as follows. An essential GTPase which binds GTP, GDP and possibly (p)ppGpp with moderate affinity, with high nucleotide exchange rates and a fairly low GTP hydrolysis rate. Plays a role in control of the cell cycle, stress response, ribosome biogenesis and in those bacteria that undergo differentiation, in morphogenesis control. The sequence is that of GTPase Obg from Halalkalibacterium halodurans (strain ATCC BAA-125 / DSM 18197 / FERM 7344 / JCM 9153 / C-125) (Bacillus halodurans).